We begin with the raw amino-acid sequence, 385 residues long: Lipid-A-disaccharide synthase (385 aa).

It belongs to the LpxB family.

It catalyses the reaction a lipid X + a UDP-2-N,3-O-bis[(3R)-3-hydroxyacyl]-alpha-D-glucosamine = a lipid A disaccharide + UDP + H(+). It participates in bacterial outer membrane biogenesis; LPS lipid A biosynthesis. In terms of biological role, condensation of UDP-2,3-diacylglucosamine and 2,3-diacylglucosamine-1-phosphate to form lipid A disaccharide, a precursor of lipid A, a phosphorylated glycolipid that anchors the lipopolysaccharide to the outer membrane of the cell. The polypeptide is Lipid-A-disaccharide synthase (Xylella fastidiosa (strain M23)).